The chain runs to 272 residues: Glutamate racemase (272 aa).

Substrate is bound by residues 16–17 (DS) and 48–49 (YG). Cys-79 acts as the Proton donor/acceptor in catalysis. 80–81 (NT) lines the substrate pocket. Cys-191 acts as the Proton donor/acceptor in catalysis. Position 192–193 (192–193 (TH)) interacts with substrate.

Belongs to the aspartate/glutamate racemases family.

It catalyses the reaction L-glutamate = D-glutamate. It functions in the pathway cell wall biogenesis; peptidoglycan biosynthesis. Provides the (R)-glutamate required for cell wall biosynthesis. The chain is Glutamate racemase from Chlorobaculum tepidum (strain ATCC 49652 / DSM 12025 / NBRC 103806 / TLS) (Chlorobium tepidum).